Consider the following 130-residue polypeptide: Large ribosomal subunit protein bL12 (130 aa).

Belongs to the bacterial ribosomal protein bL12 family. Homodimer. Part of the ribosomal stalk of the 50S ribosomal subunit. Forms a multimeric L10(L12)X complex, where L10 forms an elongated spine to which 2 to 4 L12 dimers bind in a sequential fashion. Binds GTP-bound translation factors.

Its function is as follows. Forms part of the ribosomal stalk which helps the ribosome interact with GTP-bound translation factors. Is thus essential for accurate translation. The chain is Large ribosomal subunit protein bL12 from Chlamydia muridarum (strain MoPn / Nigg).